Reading from the N-terminus, the 486-residue chain is ATP synthase subunit beta, chloroplastic (486 aa).

Residue 154 to 161 (GGAGVGKT) participates in ATP binding.

This sequence belongs to the ATPase alpha/beta chains family. F-type ATPases have 2 components, CF(1) - the catalytic core - and CF(0) - the membrane proton channel. CF(1) has five subunits: alpha(3), beta(3), gamma(1), delta(1), epsilon(1). CF(0) has four main subunits: a(1), b(1), b'(1) and c(9-12).

It is found in the plastid. The protein localises to the chloroplast thylakoid membrane. The enzyme catalyses ATP + H2O + 4 H(+)(in) = ADP + phosphate + 5 H(+)(out). Produces ATP from ADP in the presence of a proton gradient across the membrane. The catalytic sites are hosted primarily by the beta subunits. This is ATP synthase subunit beta, chloroplastic from Dennstaedtia punctilobula (Hay-scented fern).